The sequence spans 330 residues: Aspartate--ammonia ligase (330 aa).

The protein belongs to the class-II aminoacyl-tRNA synthetase family. AsnA subfamily.

Its subcellular location is the cytoplasm. It carries out the reaction L-aspartate + NH4(+) + ATP = L-asparagine + AMP + diphosphate + H(+). The protein operates within amino-acid biosynthesis; L-asparagine biosynthesis; L-asparagine from L-aspartate (ammonia route): step 1/1. This is Aspartate--ammonia ligase from Streptococcus pyogenes serotype M5 (strain Manfredo).